Here is a 74-residue protein sequence, read N- to C-terminus: Sec-independent protein translocase protein TatA (74 aa).

Residues 1–21 (MGSMSWIHWVIVLGIVALLFG) traverse the membrane as a helical segment. Residues 51–74 (EVADNKAKSALPRTEAEAEELRKS) form a disordered region. Residues 64–74 (TEAEAEELRKS) show a composition bias toward basic and acidic residues.

This sequence belongs to the TatA/E family. In terms of assembly, the Tat system comprises two distinct complexes: a TatABC complex, containing multiple copies of TatA, TatB and TatC subunits, and a separate TatA complex, containing only TatA subunits. Substrates initially bind to the TatABC complex, which probably triggers association of the separate TatA complex to form the active translocon.

The protein resides in the cell inner membrane. In terms of biological role, part of the twin-arginine translocation (Tat) system that transports large folded proteins containing a characteristic twin-arginine motif in their signal peptide across membranes. TatA could form the protein-conducting channel of the Tat system. In Caulobacter vibrioides (strain ATCC 19089 / CIP 103742 / CB 15) (Caulobacter crescentus), this protein is Sec-independent protein translocase protein TatA.